Reading from the N-terminus, the 359-residue chain is 3-dehydroquinate synthase (359 aa).

NAD(+) is bound by residues 71–76 (DGEAYK), 105–109 (GVVGD), 129–130 (TT), Lys142, and Lys151. Residues Glu184, His247, and His264 each coordinate Zn(2+).

This sequence belongs to the sugar phosphate cyclases superfamily. Dehydroquinate synthase family. Co(2+) is required as a cofactor. Zn(2+) serves as cofactor. It depends on NAD(+) as a cofactor.

It is found in the cytoplasm. It carries out the reaction 7-phospho-2-dehydro-3-deoxy-D-arabino-heptonate = 3-dehydroquinate + phosphate. It participates in metabolic intermediate biosynthesis; chorismate biosynthesis; chorismate from D-erythrose 4-phosphate and phosphoenolpyruvate: step 2/7. Functionally, catalyzes the conversion of 3-deoxy-D-arabino-heptulosonate 7-phosphate (DAHP) to dehydroquinate (DHQ). In Burkholderia cenocepacia (strain HI2424), this protein is 3-dehydroquinate synthase.